A 31-amino-acid chain; its full sequence is Photosystem II reaction center protein T (31 aa).

The chain crosses the membrane as a helical span at residues 3–23 (SFAYVLILTFAIATLFFAIAF).

Belongs to the PsbT family. As to quaternary structure, PSII is composed of 1 copy each of membrane proteins PsbA, PsbB, PsbC, PsbD, PsbE, PsbF, PsbH, PsbI, PsbJ, PsbK, PsbL, PsbM, PsbT, PsbX, PsbY, PsbZ, Psb30/Ycf12, peripheral proteins PsbO, CyanoQ (PsbQ), PsbU, PsbV and a large number of cofactors. It forms dimeric complexes.

The protein resides in the cellular thylakoid membrane. Found at the monomer-monomer interface of the photosystem II (PS II) dimer, plays a role in assembly and dimerization of PSII. PSII is a light-driven water plastoquinone oxidoreductase, using light energy to abstract electrons from H(2)O, generating a proton gradient subsequently used for ATP formation. The polypeptide is Photosystem II reaction center protein T (Synechococcus sp. (strain CC9902)).